The sequence spans 265 residues: Shikimate dehydrogenase (NADP(+)) (265 aa).

Shikimate is bound by residues Ser15–Ser17 and Thr62. Lys66 (proton acceptor) is an active-site residue. Residues Asn87 and Asp102 each contribute to the shikimate site. Residues Gly125–Ala129, Asn149–Lys154, and Leu209 each bind NADP(+). Tyr211 is a shikimate binding site. Residue Gly233 coordinates NADP(+).

This sequence belongs to the shikimate dehydrogenase family. In terms of assembly, homodimer.

The enzyme catalyses shikimate + NADP(+) = 3-dehydroshikimate + NADPH + H(+). Its pathway is metabolic intermediate biosynthesis; chorismate biosynthesis; chorismate from D-erythrose 4-phosphate and phosphoenolpyruvate: step 4/7. Its function is as follows. Involved in the biosynthesis of the chorismate, which leads to the biosynthesis of aromatic amino acids. Catalyzes the reversible NADPH linked reduction of 3-dehydroshikimate (DHSA) to yield shikimate (SA). In Legionella pneumophila (strain Lens), this protein is Shikimate dehydrogenase (NADP(+)).